Consider the following 261-residue polypeptide: DNA repair protein RecO (261 aa).

It belongs to the RecO family.

In terms of biological role, involved in DNA repair and RecF pathway recombination. The protein is DNA repair protein RecO of Gloeobacter violaceus (strain ATCC 29082 / PCC 7421).